Reading from the N-terminus, the 68-residue chain is Conotoxin Eb11.7 (68 aa).

Residues 1-26 (MMFRLTSVSCFLLVIVCLNLFQVVLT) form the signal peptide. 4 disulfide bridges follow: Cys-29-Cys-43, Cys-36-Cys-48, Cys-42-Cys-52, and Cys-47-Cys-56. The residue at position 60 (Phe-60) is a Phenylalanine amide. Residues 64-68 (ATFQE) constitute a propeptide that is removed on maturation.

Belongs to the conotoxin I2 superfamily. Expressed by the venom duct.

The protein resides in the secreted. The polypeptide is Conotoxin Eb11.7 (Conus eburneus (Ivory cone)).